The primary structure comprises 176 residues: Large ribosomal subunit protein uL10 (176 aa).

Belongs to the universal ribosomal protein uL10 family. In terms of assembly, part of the ribosomal stalk of the 50S ribosomal subunit. The N-terminus interacts with L11 and the large rRNA to form the base of the stalk. The C-terminus forms an elongated spine to which L12 dimers bind in a sequential fashion forming a multimeric L10(L12)X complex.

Forms part of the ribosomal stalk, playing a central role in the interaction of the ribosome with GTP-bound translation factors. This Dehalococcoides mccartyi (strain ATCC BAA-2100 / JCM 16839 / KCTC 5957 / BAV1) protein is Large ribosomal subunit protein uL10.